Consider the following 688-residue polypeptide: Polyphosphate kinase (688 aa).

Asparagine 45 contacts ATP. Mg(2+) contacts are provided by arginine 375 and arginine 405. One can recognise a PLD phosphodiesterase domain in the interval 430–464; sequence PGLKIHAKLFLISRKENGEVVRYAHIGTGNFNEKT. The active-site Phosphohistidine intermediate is histidine 435. Positions 468, 564, and 592 each coordinate ATP.

It belongs to the polyphosphate kinase 1 (PPK1) family. The cofactor is Mg(2+). An intermediate of this reaction is the autophosphorylated ppk in which a phosphate is covalently linked to a histidine residue through a N-P bond.

It carries out the reaction [phosphate](n) + ATP = [phosphate](n+1) + ADP. In terms of biological role, catalyzes the reversible transfer of the terminal phosphate of ATP to form a long-chain polyphosphate (polyP). This is Polyphosphate kinase from Escherichia coli O6:H1 (strain CFT073 / ATCC 700928 / UPEC).